Reading from the N-terminus, the 363-residue chain is Fructose-1,6-bisphosphatase 1 (363 aa).

Val-2 is modified (N-acetylvaline). AMP-binding positions include 18-22 and 28-32; these read VLEEG and TGEMT. Mg(2+) contacts are provided by Asp-69 and Glu-98. 113 to 114 lines the AMP pocket; it reads KY. The Mg(2+) site is built by Asp-119, Leu-121, and Asp-122. Position 122-125 (122-125) interacts with substrate; the sequence is DGSS. Arg-141 lines the AMP pocket. At Lys-151 the chain carries N6-succinyllysine. Substrate is bound by residues 213–216, 244–249, Tyr-265, and 275–277; these read NEGY, RYVGSM, and KLR. Residues Tyr-216, Tyr-245, and Tyr-265 each carry the phosphotyrosine modification. Residue Glu-281 coordinates Mg(2+). Ser-339 and Ser-353 each carry phosphoserine.

It belongs to the FBPase class 1 family. In terms of assembly, homotetramer. It depends on Mg(2+) as a cofactor.

It catalyses the reaction beta-D-fructose 1,6-bisphosphate + H2O = beta-D-fructose 6-phosphate + phosphate. It participates in carbohydrate biosynthesis; gluconeogenesis. Its activity is regulated as follows. Subject to complex allosteric regulation. The enzyme can assume an active R-state, or an inactive T-state. Intermediate conformations may exist. AMP acts as an allosteric inhibitor. AMP binding affects the turnover of bound substrate and not the affinity for substrate. Fructose 2,6-bisphosphate acts as a competitive inhibitor. Fructose 2,6-bisphosphate and AMP have synergistic effects. In terms of biological role, catalyzes the hydrolysis of fructose 1,6-bisphosphate to fructose 6-phosphate in the presence of divalent cations, acting as a rate-limiting enzyme in gluconeogenesis. Plays a role in regulating glucose sensing and insulin secretion of pancreatic beta-cells. Appears to modulate glycerol gluconeogenesis in liver. Important regulator of appetite and adiposity; increased expression of the protein in liver after nutrient excess increases circulating satiety hormones and reduces appetite-stimulating neuropeptides and thus seems to provide a feedback mechanism to limit weight gain. The polypeptide is Fructose-1,6-bisphosphatase 1 (Fbp1) (Rattus norvegicus (Rat)).